Here is an 835-residue protein sequence, read N- to C-terminus: Transcription intermediary factor 1-beta (835 aa).

Residues 14–24 (AATAASAASGS) are compositionally biased toward low complexity. Positions 14 to 57 (AATAASAASGSPGSGEGSAGGEKRPAASSAAAASASASSPAGGG) are disordered. 3 positions are modified to phosphoserine: S24, S27, and S31. A Glycyl lysine isopeptide (Lys-Gly) (interchain with G-Cter in SUMO2) cross-link involves residue K36. Positions 39 to 53 (AASSAAAASASASSP) are enriched in low complexity. A Phosphoserine modification is found at S52. The RING-type zinc finger occupies 67–123 (CGVCRERLRPERDPRLLPCLHSACSACLGPATPAAANNSGDGGSAGDGAMVDCPVCK). A Glycyl lysine isopeptide (Lys-Gly) (interchain with G-Cter in SUMO2) cross-link involves residue K129. Residue S140 is modified to Phosphoserine. The segment at 150–197 (DANQCCTSCEDNAPATSYCVECSEPLCETCVEAHQRVKYTKDHTVRST) adopts a B box-type 1; atypical zinc-finger fold. Zn(2+) contacts are provided by C155, C158, C179, and H183. K201 is covalently cross-linked (Glycyl lysine isopeptide (Lys-Gly) (interchain with G-Cter in SUMO2)). The B box-type 2 zinc-finger motif lies at 206–247 (ERTVYCNVHKHEPLVLFCESCDTLTCRDCQLNAHKDHQYQFL). Positions 211, 214, 234, and 239 each coordinate Zn(2+). The segment at 248 to 378 (EDAVRNQRKL…LIYFQLHRAL (131 aa)) is leucine zipper alpha helical coiled-coil region. The interval 249 to 378 (DAVRNQRKLL…LIYFQLHRAL (130 aa)) is interaction with MAGEC2. Residues K256 and K263 each participate in a glycyl lysine isopeptide (Lys-Gly) (interchain with G-Cter in SUMO2) cross-link. K268 carries the post-translational modification N6-acetyllysine. Residue K274 forms a Glycyl lysine isopeptide (Lys-Gly) (interchain with G-Cter in SUMO2) linkage. At K306 the chain carries N6-acetyllysine; alternate. K306 participates in a covalent cross-link: Glycyl lysine isopeptide (Lys-Gly) (interchain with G-Cter in SUMO2); alternate. K321 participates in a covalent cross-link: Glycyl lysine isopeptide (Lys-Gly) (interchain with G-Cter in SUMO2). Position 342 is an N6-acetyllysine (K342). Residue K368 forms a Glycyl lysine isopeptide (Lys-Gly) (interchain with G-Cter in SUMO2) linkage. The segment at 368-372 (KLIYF) is involved in binding PPP1CA. K379 carries the post-translational modification N6-acetyllysine; alternate. K379 participates in a covalent cross-link: Glycyl lysine isopeptide (Lys-Gly) (interchain with G-Cter in SUMO2); alternate. Residue K379 forms a Glycyl lysine isopeptide (Lys-Gly) (interchain with G-Cter in SUMO1); alternate linkage. K409 participates in a covalent cross-link: Glycyl lysine isopeptide (Lys-Gly) (interchain with G-Cter in SUMO2). The segment at 413-481 (ERPGTNSTGP…SRSGEGEVSG (69 aa)) is disordered. A Phosphoserine modification is found at S419. K436 participates in a covalent cross-link: Glycyl lysine isopeptide (Lys-Gly) (interchain with G-Cter in SUMO2). Over residues 436-445 (KQGSGSSQPM) the composition is skewed to polar residues. A phosphoserine mark is found at S439 and S441. A Glycyl lysine isopeptide (Lys-Gly) (interchain with G-Cter in SUMO2); alternate cross-link involves residue K470. Residue K470 forms a Glycyl lysine isopeptide (Lys-Gly) (interchain with G-Cter in SUMO1); alternate linkage. Citrulline is present on R471. The residue at position 472 (S472) is a Phosphoserine. Position 473 is a citrulline (R473). Residues S474, S480, and S490 each carry the phosphoserine modification. The segment at 477 to 514 (GEVSGLMRKVPRVSLERLDLDLTSDSQPPVFKVFPGST) is HP1 box. The PxVxL motif motif lies at 482-495 (LMRKVPRVSLERLD). T499 bears the Phosphothreonine mark. Phosphoserine is present on S502. K508 participates in a covalent cross-link: Glycyl lysine isopeptide (Lys-Gly) (interchain with G-Cter in SUMO2). K555 participates in a covalent cross-link: Glycyl lysine isopeptide (Lys-Gly) (interchain with G-Cter in SUMO2); alternate. K555 is covalently cross-linked (Glycyl lysine isopeptide (Lys-Gly) (interchain with G-Cter in SUMO); alternate). A Glycyl lysine isopeptide (Lys-Gly) (interchain with G-Cter in SUMO2) cross-link involves residue K576. A Phosphoserine modification is found at S595. The PHD-type zinc-finger motif lies at 626 to 673 (ATICRVCQKPGDLVMCNQCEFCFHLDCHLPSLQDVPGEEWSCSLCHVL). A Glycyl lysine isopeptide (Lys-Gly) (interchain with G-Cter in SUMO) cross-link involves residue K677. Residues S684, S690, and S698 each carry the phosphoserine modification. Residues 696–800 (KLSPANQRKC…RFFETRMNDA (105 aa)) form the Bromo domain. K751 is covalently cross-linked (Glycyl lysine isopeptide (Lys-Gly) (interchain with G-Cter in SUMO2); alternate). Residue K751 forms a Glycyl lysine isopeptide (Lys-Gly) (interchain with G-Cter in SUMO1); alternate linkage. K751 participates in a covalent cross-link: Glycyl lysine isopeptide (Lys-Gly) (interchain with G-Cter in SUMO); alternate. S753 is modified (phosphoserine). The residue at position 756 (Y756) is a Phosphotyrosine. S758 is modified (phosphoserine). K771, K775, and K780 each carry N6-acetyllysine; alternate. Residues K771, K775, and K780 each participate in a glycyl lysine isopeptide (Lys-Gly) (interchain with G-Cter in SUMO2); alternate cross-link. Residue K780 forms a Glycyl lysine isopeptide (Lys-Gly) (interchain with G-Cter in SUMO1); alternate linkage. Phosphoserine is present on S785. K805 is covalently cross-linked (Glycyl lysine isopeptide (Lys-Gly) (interchain with G-Cter in SUMO2)). S825 is subject to Phosphoserine; by ATM and ATR and dsDNA kinase.

Belongs to the TRIM/RBCC family. In terms of assembly, interacts with ZNF382. Interacts with SETX. Oligomer; the RBCC domain homotrimerizes and interacts with one molecule of KRAB to form the KRAB-KAP1 corepressor complex. Binding to a KRAB domain is an absolute requirement for silencing gene expression. Interacts with CEBPB and NR3C1. Interacts with a number of KRAB-ZFP proteins including ZNF10, ZFP53, ZFP68 and ZNF256. Interacts with NCOR1, NR3C1 and CHD3. Interacts with CEBPB (via the RING-type and PHD-type zinc fingers). Component of a ternary complex that includes TRIM28, a HP1 protein (CBX1, CBX3 OR CBX5), a KRAB domain-containing protein, and DNA. Interacts with CBX5 (via the PxVxL motif); the interaction occurs in interphase nuclei and competes for binding POGZ. Interacts with POGZ; the interaction competes for interaction with CBX5. Interacts with SETDB1; the interaction is enhanced by KAP1 sumoylation, stimulates SETDB1 histone methyltransferase activity and gene silencing. Interacts (via the PHD-type zinc finger) with UBE2I; the interaction is required for sumoylation and repressor activity. Component of the TRIM28/KAP1-ERBB4-MDM2 complex involved in connecting growth factor and DNA damage responses. Interacts directly with ERBB4; the interaction represses ERBB4-mediated transcription activity. Interacts with MDM2; the interaction contributes to p53/TP53 inactivation. Component of the TRIM28/KAP1-MDM2-p53/TP53; involved in regulating p53/TP53 stabilization and activity. Interacts (via the leucine zipper alpha helical coiled-coil) with E2F1 (central region); the interaction inhibits E2F1 acetylation and transcriptional activity. Interacts with PPP1CA; the interaction dephosphorylates TRIM28 at Ser-824 and forms a complex at the p21 promoter site. Interacts with PPP1CB; the interaction is weak but is increased on dephosphorylation at Ser-824. Interacts with SMARCAD1. Interacts with, and sumoylates IRF7. Interacts with MAGEC2. Part of a complex composed of TRIM28, HDAC1, HDAC2 and EHMT2. Interacts with AICDA. The large PER complex involved in the histone methylation is composed of at least PER2, CBX3, TRIM28, SUV39H1 and/or SUV39H2; CBX3 mediates the formation of the complex. Interacts with NR4A3; the interactions potentiates NR4A3 activity on NurRE promoter. Interacts (unphosphorylated or phosphorylated form) with ZBTB1 (via BTB domain). Probably part of a corepressor complex containing ZNF304, TRIM28, SETDB1 and DNMT1. Interacts with ATRX. Forms a complex with ATRX, SETDB1 and ZNF274. Interacts with ZFP568; the interaction mediates ZFP568 transcriptional repression activity. Interacts with RRP1B. Interacts with CRY1. Interacts with ZNF263; recruited to the SIX3 promoter along with other proteins involved in chromatin modification and transcriptional corepression where it contributes to transcriptional repression. Interacts with CYREN (via XLF motif). Interacts with TRIM17; this interaction prevents TRIM28 activity. Interacts with ZNF746. Interacts with PHF13. Interacts with ZNF354C. Interacts with ZNF432; the interaction is independent of PARP1. In terms of processing, ATM-induced phosphorylation on Ser-825 represses sumoylation leading to the de-repression of expression of a subset of genes involved in cell cycle control and apoptosis in response to genotoxic stress. Dephosphorylation by the phosphatases, PPP1CA and PP1CB forms, allows sumoylation and expression of TRIM28 target genes. Sumoylation/desumoylation events regulate TRIM28-mediated transcriptional repression. Sumoylation is required for interaction with CHD3 and SETDB1 and the corepressor activity. Represses and is repressed by Ser-824 phosphorylation. Enhances the TRIM28 corepressor activity, inhibiting transcriptional activity of a number of genes including GADD45A and CDKN1A/p21. Lys-555, Lys-780 and Lys-805 are the major sites of sumoylation. In response to Dox-induced DNA damage, enhanced phosphorylation on Ser-825 prevents sumoylation and allows de-repression of CDKN1A/p21. Post-translationally, auto-ubiquitinated; enhanced by MAGEA2 and MAGEC2. In terms of processing, citrullinated by PADI4. ADP-ribosylated by SIRT6, promoting TRIM28/KAP1 interaction with CBX5, thereby contributing to the packaging of LINE-1 retrotransposon elements into transcriptionally repressive heterochromatin.

Its subcellular location is the nucleus. The catalysed reaction is S-ubiquitinyl-[E2 ubiquitin-conjugating enzyme]-L-cysteine + [acceptor protein]-L-lysine = [E2 ubiquitin-conjugating enzyme]-L-cysteine + N(6)-ubiquitinyl-[acceptor protein]-L-lysine.. It participates in protein modification; protein sumoylation. Nuclear corepressor for KRAB domain-containing zinc finger proteins (KRAB-ZFPs). Mediates gene silencing by recruiting CHD3, a subunit of the nucleosome remodeling and deacetylation (NuRD) complex, and SETDB1 (which specifically methylates histone H3 at 'Lys-9' (H3K9me)) to the promoter regions of KRAB target genes. Enhances transcriptional repression by coordinating the increase in H3K9me, the decrease in histone H3 'Lys-9 and 'Lys-14' acetylation (H3K9ac and H3K14ac, respectively) and the disposition of HP1 proteins to silence gene expression. Recruitment of SETDB1 induces heterochromatinization. May play a role as a coactivator for CEBPB and NR3C1 in the transcriptional activation of ORM1. Also a corepressor for ERBB4. Inhibits E2F1 activity by stimulating E2F1-HDAC1 complex formation and inhibiting E2F1 acetylation. May serve as a partial backup to prevent E2F1-mediated apoptosis in the absence of RB1. Important regulator of CDKN1A/p21(CIP1). Has E3 SUMO-protein ligase activity toward itself via its PHD-type zinc finger. Also specifically sumoylates IRF7, thereby inhibiting its transactivation activity. Ubiquitinates p53/TP53 leading to its proteasomal degradation; the function is enhanced by MAGEC2 and MAGEA2, and possibly MAGEA3 and MAGEA6. Mediates the nuclear localization of KOX1, ZNF268 and ZNF300 transcription factors. In association with isoform 2 of ZFP90, is required for the transcriptional repressor activity of FOXP3 and the suppressive function of regulatory T-cells (Treg). Probably forms a corepressor complex required for activated KRAS-mediated promoter hypermethylation and transcriptional silencing of tumor suppressor genes (TSGs) or other tumor-related genes in colorectal cancer (CRC) cells. Required to maintain a transcriptionally repressive state of genes in undifferentiated embryonic stem cells (ESCs). In ESCs, in collaboration with SETDB1, is also required for H3K9me3 and silencing of endogenous and introduced retroviruses in a DNA-methylation independent-pathway. Associates at promoter regions of tumor suppressor genes (TSGs) leading to their gene silencing. The SETDB1-TRIM28-ZNF274 complex may play a role in recruiting ATRX to the 3'-exons of zinc finger genes with atypical chromatin signatures to establish or maintain/protect H3K9me3 at these transcriptionally active regions. This chain is Transcription intermediary factor 1-beta, found in Rattus norvegicus (Rat).